Here is a 203-residue protein sequence, read N- to C-terminus: DNA-directed RNA polymerase subunit gamma (203 aa).

Zn(2+) is bound by residues Cys34, Cys36, Cys49, and Cys52.

It belongs to the RNA polymerase beta' chain family. RpoC1 subfamily. As to quaternary structure, in cyanobacteria the RNAP catalytic core is composed of 2 alpha, 1 beta, 1 beta', 1 gamma and 1 omega subunit. When a sigma factor is associated with the core the holoenzyme is formed, which can initiate transcription. Zn(2+) is required as a cofactor.

The enzyme catalyses RNA(n) + a ribonucleoside 5'-triphosphate = RNA(n+1) + diphosphate. In terms of biological role, DNA-dependent RNA polymerase catalyzes the transcription of DNA into RNA using the four ribonucleoside triphosphates as substrates. The chain is DNA-directed RNA polymerase subunit gamma (rpoC1) from Prochlorothrix hollandica.